Consider the following 403-residue polypeptide: Phosphoglycerate kinase (403 aa).

Substrate-binding positions include 22–24 (DLN), Arg-37, 60–63 (HLGR), Arg-119, and Arg-156. Residues Lys-206, Gly-302, Glu-333, and 359-362 (GGDS) contribute to the ATP site.

The protein belongs to the phosphoglycerate kinase family. As to quaternary structure, monomer.

It is found in the cytoplasm. It carries out the reaction (2R)-3-phosphoglycerate + ATP = (2R)-3-phospho-glyceroyl phosphate + ADP. It participates in carbohydrate degradation; glycolysis; pyruvate from D-glyceraldehyde 3-phosphate: step 2/5. The sequence is that of Phosphoglycerate kinase from Leifsonia xyli subsp. xyli (strain CTCB07).